The chain runs to 211 residues: 3,4-dihydroxy-2-butanone 4-phosphate synthase (211 aa).

D-ribulose 5-phosphate is bound by residues 37-38 (RE), aspartate 42, 150-154 (RIGHT), and glutamate 174. Residue glutamate 38 participates in Mg(2+) binding. Mg(2+) is bound at residue histidine 153.

This sequence belongs to the DHBP synthase family. Homodimer. It depends on Mg(2+) as a cofactor. Mn(2+) serves as cofactor.

It carries out the reaction D-ribulose 5-phosphate = (2S)-2-hydroxy-3-oxobutyl phosphate + formate + H(+). It participates in cofactor biosynthesis; riboflavin biosynthesis; 2-hydroxy-3-oxobutyl phosphate from D-ribulose 5-phosphate: step 1/1. In terms of biological role, catalyzes the conversion of D-ribulose 5-phosphate to formate and 3,4-dihydroxy-2-butanone 4-phosphate. The protein is 3,4-dihydroxy-2-butanone 4-phosphate synthase of Buchnera aphidicola subsp. Baizongia pistaciae (strain Bp).